The following is a 172-amino-acid chain: Histone H2A.Z-specific chaperone CHZ1 (172 aa).

2 stretches are compositionally biased toward basic and acidic residues: residues 1–10 (MAEEIKDKQE) and 54–68 (NYDD…EDKA). Residues 1–172 (MAEEIKDKQE…PAPASPTEPK (172 aa)) are disordered. Composition is skewed to acidic residues over residues 78-88 (EDSESEVDDEK) and 96-105 (EDEEEDDLSE). Basic and acidic residues predominate over residues 121–139 (KIIDYKKTAEKLEKNGEVG). A compositionally biased stretch (acidic residues) spans 140 to 155 (KDDDDDEDDEENDEEF). Positions 160–172 (APAPAPASPTEPK) are enriched in pro residues.

Belongs to the CHZ1 family. Forms a heterotrimer with H2A.Z-H2B, stabilizing the association of the histone dimer. Also, with a lower affinity, forms a heterotrimer with H2A-H2B.

It is found in the nucleus. Its function is as follows. Forms a chaperone-bound H2A.Z-H2B complex that acts as a source for SWR1 complex-dependent H2A to H2A.Z histone replacement in chromatin. This is Histone H2A.Z-specific chaperone CHZ1 (CHZ1) from Kluyveromyces lactis (strain ATCC 8585 / CBS 2359 / DSM 70799 / NBRC 1267 / NRRL Y-1140 / WM37) (Yeast).